Here is a 550-residue protein sequence, read N- to C-terminus: Lariat debranching enzyme (550 aa).

2 residues coordinate a divalent metal cation: Cys-8 and His-10. Ser-28 carries the post-translational modification Phosphoserine. The a divalent metal cation site is built by Asp-39 and Asn-84. Positions Ser-124–Arg-154 are lariat recognition loop. Position 128 is an N6-acetyllysine (Lys-128). The a divalent metal cation site is built by His-174, His-226, and His-228. The tract at residues Glu-390 to Glu-550 is disordered. Residues Asn-416–Asn-426 are compositionally biased toward polar residues. Positions Ile-430 to Ala-445 are enriched in acidic residues. Over residues Ser-450–Val-483 the composition is skewed to polar residues. 9 positions are modified to phosphoserine: Ser-470, Ser-480, Ser-484, Ser-485, Ser-489, Ser-491, Ser-494, Ser-505, and Ser-520. Residues Lys-498–Arg-528 are compositionally biased toward basic and acidic residues.

It belongs to the lariat debranching enzyme family. Fe(2+) serves as cofactor. The cofactor is Zn(2+). Mn(2+) is required as a cofactor.

The protein resides in the nucleus. Active in presence of diverse metals including Fe(2+), Zn(2+), Mn(2+). Also activated by Ca(2+). Binds two metal cations in two adjacent alpha and beta metal-binding pockets. In terms of biological role, cleaves the 2'-5' phosphodiester linkage at the branch point of excised lariat intron RNA and converts them into linear molecules that can be subsequently degraded, thereby facilitating ribonucleotide turnover. Linked to its role in pre-mRNA processing mechanism, may also participate in retrovirus replication and have an antiviral cell-intrinsic defense function. This chain is Lariat debranching enzyme (Dbr1), found in Mus musculus (Mouse).